The following is a 64-amino-acid chain: Beta-defensin 1 (64 aa).

A signal peptide spans 1-20; that stretch reads MRLHHLLLVLFFLVLSAGSG. The propeptide occupies 21 to 26; it reads FTQGIR. Cystine bridges form between cysteine 31–cysteine 60, cysteine 38–cysteine 53, and cysteine 43–cysteine 61.

Belongs to the beta-defensin family. As to quaternary structure, monomer. Homodimer.

It localises to the secreted. The protein localises to the membrane. Its function is as follows. Has bactericidal activity. May act as a ligand for C-C chemokine receptor CCR6. Positively regulates the sperm motility and bactericidal activity in a CCR6-dependent manner. Binds to CCR6 and triggers Ca2+ mobilization in the sperm which is important for its motility. The protein is Beta-defensin 1 (DEFB1) of Capra hircus (Goat).